A 161-amino-acid polypeptide reads, in one-letter code: MTAALLPRVGIGVDVHPFSPDRPLWLAGLHWPGEPGLAGHSDADVVIHALCNALLSAAGLGDLGTQFGTAEPEWRDAAGTRLLTETVRLVRDAGYAVGNAAVQLLGERPKLRERRTEAEQLLTETVGAPIALSAATTDGLGFLGRRDGLAAVATALVFPAR.

Residues D14 and H16 each coordinate a divalent metal cation. Residues 14 to 16 (DVH) and 40 to 41 (HS) each bind 4-CDP-2-C-methyl-D-erythritol 2-phosphate. H48 contributes to the a divalent metal cation binding site. 4-CDP-2-C-methyl-D-erythritol 2-phosphate is bound by residues 62-64 (DLG), F142, and R145.

Belongs to the IspF family. As to quaternary structure, homotrimer. A divalent metal cation is required as a cofactor.

It catalyses the reaction 4-CDP-2-C-methyl-D-erythritol 2-phosphate = 2-C-methyl-D-erythritol 2,4-cyclic diphosphate + CMP. The protein operates within isoprenoid biosynthesis; isopentenyl diphosphate biosynthesis via DXP pathway; isopentenyl diphosphate from 1-deoxy-D-xylulose 5-phosphate: step 4/6. Functionally, involved in the biosynthesis of isopentenyl diphosphate (IPP) and dimethylallyl diphosphate (DMAPP), two major building blocks of isoprenoid compounds. Catalyzes the conversion of 4-diphosphocytidyl-2-C-methyl-D-erythritol 2-phosphate (CDP-ME2P) to 2-C-methyl-D-erythritol 2,4-cyclodiphosphate (ME-CPP) with a corresponding release of cytidine 5-monophosphate (CMP). The sequence is that of 2-C-methyl-D-erythritol 2,4-cyclodiphosphate synthase from Acidothermus cellulolyticus (strain ATCC 43068 / DSM 8971 / 11B).